The primary structure comprises 695 residues: Elongation factor G (695 aa).

A tr-type G domain is found at Lys10–Leu289. GTP-binding positions include Ala19–Thr26, Asp83–His87, and Asn137–Asp140.

Belongs to the TRAFAC class translation factor GTPase superfamily. Classic translation factor GTPase family. EF-G/EF-2 subfamily.

Its subcellular location is the cytoplasm. In terms of biological role, catalyzes the GTP-dependent ribosomal translocation step during translation elongation. During this step, the ribosome changes from the pre-translocational (PRE) to the post-translocational (POST) state as the newly formed A-site-bound peptidyl-tRNA and P-site-bound deacylated tRNA move to the P and E sites, respectively. Catalyzes the coordinated movement of the two tRNA molecules, the mRNA and conformational changes in the ribosome. The chain is Elongation factor G from Protochlamydia amoebophila (strain UWE25).